The chain runs to 1088 residues: Ran-binding protein 17 (1088 aa).

N-acetylalanine is present on A2. S569 is modified (phosphoserine).

This sequence belongs to the exportin family. As to quaternary structure, binds to nucleoporins and the GTP-bound form of Ran. In terms of tissue distribution, highly expressed in testis, moderately in pancreas and weakly in other tissues studied.

The protein resides in the cytoplasm. It is found in the nucleus. Its subcellular location is the nuclear pore complex. Its function is as follows. May function as a nuclear transport receptor. The polypeptide is Ran-binding protein 17 (RANBP17) (Homo sapiens (Human)).